A 586-amino-acid chain; its full sequence is FAD-linked oxidoreductase orf1 (586 aa).

The signal sequence occupies residues 1–17 (MKSFATTVLLVTPGIYA). 12 N-linked (GlcNAc...) asparagine glycosylation sites follow: Asn-29, Asn-51, Asn-79, Asn-110, Asn-146, Asn-188, Asn-314, Asn-321, Asn-358, Asn-402, Asn-434, and Asn-461. Residues 124-303 (TLGNYVSYAI…LSMTAKVHPD (180 aa)) form the FAD-binding PCMH-type domain.

Belongs to the oxygen-dependent FAD-linked oxidoreductase family.

It catalyses the reaction betaenone C = betaenone A. It participates in mycotoxin biosynthesis. FAD-linked oxidoreductase; part of the gene cluster that mediates the biosynthesis of betaenones, phytotoxic polyketides involved in leaf spot disease in sugar beets. The first step of the pathway is the synthesis of dehydroprobetaenone I by the polyketide synthase bet1 and the enoyl reductase bet3 via condensation of one acetyl-CoA starter unit with 7 malonyl-CoA units and 5 methylations. The C-terminal reductase (R) domain of bet1 catalyzes the reductive release of the polyketide chain. Because bet1 lacks a designated enoylreductase (ER) domain, the required activity is provided the enoyl reductase bet3. The short-chain dehydrogenase/reductase bet4 then catalyzes reduction of dehydroprobetaenone I to probetaenone I. The cytochrome P450 monooxygenase bet2 catalyzes successive epoxidation, oxidation (resulting from epoxide opening) and hydroxylation to install a tertiary alcohol in the decaline ring to yield betaenone C from dehydroprobetaenone I and betaenone B from probetaenone I. The FAD-linked oxidoreductase (orf1) is probably responsible for the conversion of betaenone C to betaenone A via an intramolecular aldol reaction between C-1 and C-17 to form the bridged tricyclic system in betaenone A. The sequence is that of FAD-linked oxidoreductase orf1 from Neocamarosporium betae (Beet black rot fungus).